We begin with the raw amino-acid sequence, 65 residues long: MPKIKTNRGAAKRFRKTGSGKIRRNKAFTSHILTKKSTKRKRELRQGTLVAKADQKNISRLIPYI.

Residues 1–28 (MPKIKTNRGAAKRFRKTGSGKIRRNKAF) are disordered. Basic residues predominate over residues 10-26 (AAKRFRKTGSGKIRRNK).

It belongs to the bacterial ribosomal protein bL35 family.

The polypeptide is Large ribosomal subunit protein bL35 (Syntrophotalea carbinolica (strain DSM 2380 / NBRC 103641 / GraBd1) (Pelobacter carbinolicus)).